The sequence spans 80 residues: Exodeoxyribonuclease 7 small subunit (80 aa).

This sequence belongs to the XseB family. Heterooligomer composed of large and small subunits.

The protein localises to the cytoplasm. It catalyses the reaction Exonucleolytic cleavage in either 5'- to 3'- or 3'- to 5'-direction to yield nucleoside 5'-phosphates.. Bidirectionally degrades single-stranded DNA into large acid-insoluble oligonucleotides, which are then degraded further into small acid-soluble oligonucleotides. The sequence is that of Exodeoxyribonuclease 7 small subunit from Pseudomonas fluorescens (strain Pf0-1).